Consider the following 488-residue polypeptide: GTPase Der (488 aa).

Residues 3 to 166 (PVVALVGRPN…YALAPYAEAL (164 aa)) enclose the EngA-type G 1 domain. GTP is bound by residues 9–16 (GRPNVGKS), 56–60 (DTGGI), and 118–121 (NKVD). The segment at 168-191 (LNRDGDEDEDEEEREYSEEEAEAE) is disordered. A compositionally biased stretch (acidic residues) spans 172–189 (GDEDEDEEEREYSEEEAE). Positions 200-373 (IKMAIIGKPN…SVQEAYDSAT (174 aa)) constitute an EngA-type G 2 domain. Residues 206–213 (GKPNVGKS), 253–257 (DTAGV), and 318–321 (NKWD) each bind GTP. The KH-like domain maps to 374–458 (RRVSTSMLTR…PIQIRFQDSA (85 aa)).

The protein belongs to the TRAFAC class TrmE-Era-EngA-EngB-Septin-like GTPase superfamily. EngA (Der) GTPase family. In terms of assembly, associates with the 50S ribosomal subunit.

In terms of biological role, GTPase that plays an essential role in the late steps of ribosome biogenesis. In Shewanella sediminis (strain HAW-EB3), this protein is GTPase Der.